The sequence spans 124 residues: Ribonuclease pancreatic (124 aa).

Residues 1–13 show a composition bias toward basic and acidic residues; that stretch reads KETAAAKFERQHI. Positions 1–24 are disordered; the sequence is KETAAAKFERQHIDSNPSSVSSSN. Residues lysine 7 and arginine 10 each coordinate substrate. Residue histidine 12 is the Proton acceptor of the active site. The span at 15-24 shows a compositional bias: low complexity; it reads SNPSSVSSSN. Cystine bridges form between cysteine 26–cysteine 84, cysteine 40–cysteine 95, cysteine 58–cysteine 110, and cysteine 65–cysteine 72. An N-linked (GlcNAc...) asparagine; partial glycan is attached at asparagine 34. Substrate-binding positions include 41 to 45, lysine 66, and arginine 85; that span reads KPVNT. Histidine 119 (proton donor) is an active-site residue.

The protein belongs to the pancreatic ribonuclease family. As to quaternary structure, monomer. Interacts with and forms tight 1:1 complexes with RNH1. Dimerization of two such complexes may occur. Interaction with RNH1 inhibits this protein. Pancreas.

The protein resides in the secreted. The catalysed reaction is an [RNA] containing cytidine + H2O = an [RNA]-3'-cytidine-3'-phosphate + a 5'-hydroxy-ribonucleotide-3'-[RNA].. The enzyme catalyses an [RNA] containing uridine + H2O = an [RNA]-3'-uridine-3'-phosphate + a 5'-hydroxy-ribonucleotide-3'-[RNA].. Functionally, endonuclease that catalyzes the cleavage of RNA on the 3' side of pyrimidine nucleotides. Acts on single-stranded and double-stranded RNA. This is Ribonuclease pancreatic (RNASE1) from Antilocapra americana (Pronghorn).